We begin with the raw amino-acid sequence, 86 residues long: Large ribosomal subunit protein uL23 (86 aa).

The protein belongs to the universal ribosomal protein uL23 family. As to quaternary structure, part of the 50S ribosomal subunit. Contacts protein L29.

Functionally, binds to 23S rRNA. One of the proteins that surrounds the polypeptide exit tunnel on the outside of the ribosome. The protein is Large ribosomal subunit protein uL23 of Methanothermobacter thermautotrophicus (strain ATCC 29096 / DSM 1053 / JCM 10044 / NBRC 100330 / Delta H) (Methanobacterium thermoautotrophicum).